The chain runs to 250 residues: Ribonuclease 3 (250 aa).

Over residues 1 to 15 (MTKTPAKKKRARSSK) the composition is skewed to basic residues. Residues 1-21 (MTKTPAKKKRARSSKAKGTDA) are disordered. Residues 22-150 (NAALEARIGH…VIGAIFLDGG (129 aa)) form the RNase III domain. Glu63 is a Mg(2+) binding site. Asp67 is a catalytic residue. Residues Asp136 and Glu139 each coordinate Mg(2+). Residue Glu139 is part of the active site. Positions 175–244 (DPKTVLQEWA…ASVMIEREGV (70 aa)) constitute a DRBM domain.

The protein belongs to the ribonuclease III family. In terms of assembly, homodimer. Requires Mg(2+) as cofactor.

The protein resides in the cytoplasm. The catalysed reaction is Endonucleolytic cleavage to 5'-phosphomonoester.. Digests double-stranded RNA. Involved in the processing of primary rRNA transcript to yield the immediate precursors to the large and small rRNAs (23S and 16S). Processes some mRNAs, and tRNAs when they are encoded in the rRNA operon. Processes pre-crRNA and tracrRNA of type II CRISPR loci if present in the organism. This is Ribonuclease 3 from Bradyrhizobium diazoefficiens (strain JCM 10833 / BCRC 13528 / IAM 13628 / NBRC 14792 / USDA 110).